We begin with the raw amino-acid sequence, 148 residues long: Large ribosomal subunit protein uL15 (148 aa).

Residues 1-12 are compositionally biased toward basic and acidic residues; the sequence is MSEPIKLHDLRP. A disordered region spans residues 1 to 52; that stretch reads MSEPIKLHDLRPAKGANKPKTRVGRGEASKGKTAGRGTKGTKARKQVSAAFE.

This sequence belongs to the universal ribosomal protein uL15 family. In terms of assembly, part of the 50S ribosomal subunit.

Functionally, binds to the 23S rRNA. The sequence is that of Large ribosomal subunit protein uL15 from Corynebacterium diphtheriae (strain ATCC 700971 / NCTC 13129 / Biotype gravis).